We begin with the raw amino-acid sequence, 603 residues long: Terpenoid synthase 22 (603 aa).

4 residues coordinate Mg(2+): Asp356, Asp360, Asn500, and Glu508. A DDXXD motif motif is present at residues 356 to 360 (DDTCD).

The protein belongs to the terpene synthase family. Tpsa subfamily. It depends on Mg(2+) as a cofactor. Requires Mn(2+) as cofactor. Predominantly expressed in siliques but also in flowers.

It is found in the cytoplasm. The protein operates within secondary metabolite biosynthesis; terpenoid biosynthesis. Its function is as follows. Involved in terpene biosynthesis in roots. Possesses sesquiterpene (C15) synthase activity in vitro. Does not seem to be involved in diterpene (C20) biosynthesis. This chain is Terpenoid synthase 22, found in Arabidopsis thaliana (Mouse-ear cress).